Consider the following 73-residue polypeptide: Methionyl-tRNA formyltransferase (73 aa).

Belongs to the Fmt family.

The catalysed reaction is L-methionyl-tRNA(fMet) + (6R)-10-formyltetrahydrofolate = N-formyl-L-methionyl-tRNA(fMet) + (6S)-5,6,7,8-tetrahydrofolate + H(+). In terms of biological role, attaches a formyl group to the free amino group of methionyl-tRNA(fMet). The formyl group appears to play a dual role in the initiator identity of N-formylmethionyl-tRNA by promoting its recognition by IF2 and preventing the misappropriation of this tRNA by the elongation apparatus. The polypeptide is Methionyl-tRNA formyltransferase (fmt) (Rickettsia rickettsii).